The chain runs to 538 residues: MSQHYQHDVLVIGSGAAGLSLALTLPEHLRIAVLSKGELSQGSTYWAQGGVAAVLDDTDTVESHVEDTLVAGGGLCREDAVRFTVEHSREAIQWLIEQGVPFTRDEQHNHEEGSFEYHLTREGGHSHRRIIHAADATGAAIFNTLLAQARRRPNIELLSQRVAVDLITERKLGLPSKRCLGAYVLNRESGEVDTFRARFSVLASGGASKVYLYTSNPDGNSGDGIAMAWRAGCRVGNLEFNQFHPTCLYHPQAKSFLITEALRGEGALLRLPNGERFMPRFDPRGELAPRDIVARAIDHEMKRLGIDCVYLDISHKPAEFIKAHFPTVYERCLDFGIDITQQPIPVVPAAHYTCGGVLVDQHGHTDVPGLYAIGETTFTGLHGANRMASNSLLECFVYARSAAADMLQRLPGTPVPESLPSWDASQVTDSDEDVIIAHNWDELRRFMWDYVGIVRTNKRLQRAQHRVRLLLSEIDEFYSNYKVSRDLIELRNLALVAELIIRSAMQRRESRGLHYTLDYPDLLPEARDTILVPPIYGD.

FAD-binding positions include serine 14–alanine 17, lysine 36, serine 43–glycine 50, and aspartate 223. The Proton donor/acceptor role is filled by arginine 290. FAD is bound by residues glutamate 375 and serine 391–leucine 392.

This sequence belongs to the FAD-dependent oxidoreductase 2 family. NadB subfamily. The cofactor is FAD.

It is found in the cytoplasm. It carries out the reaction L-aspartate + O2 = iminosuccinate + H2O2. It participates in cofactor biosynthesis; NAD(+) biosynthesis; iminoaspartate from L-aspartate (oxidase route): step 1/1. Its function is as follows. Catalyzes the oxidation of L-aspartate to iminoaspartate, the first step in the de novo biosynthesis of NAD(+). The sequence is that of L-aspartate oxidase (nadB) from Pseudomonas aeruginosa (strain ATCC 15692 / DSM 22644 / CIP 104116 / JCM 14847 / LMG 12228 / 1C / PRS 101 / PAO1).